A 294-amino-acid chain; its full sequence is tRNA pseudouridine synthase B (294 aa).

Asp-39 functions as the Nucleophile in the catalytic mechanism.

This sequence belongs to the pseudouridine synthase TruB family. Type 1 subfamily.

The catalysed reaction is uridine(55) in tRNA = pseudouridine(55) in tRNA. Its function is as follows. Responsible for synthesis of pseudouridine from uracil-55 in the psi GC loop of transfer RNAs. This is tRNA pseudouridine synthase B from Streptococcus pyogenes serotype M5 (strain Manfredo).